The sequence spans 542 residues: Chaperonin GroEL 2 (542 aa).

ATP-binding positions include 29–32 (TLGP), 86–90 (DGTTT), G413, 477–479 (NAA), and D493.

This sequence belongs to the chaperonin (HSP60) family. As to quaternary structure, forms a cylinder of 14 subunits composed of two heptameric rings stacked back-to-back. Interacts with the co-chaperonin GroES.

It localises to the cytoplasm. The enzyme catalyses ATP + H2O + a folded polypeptide = ADP + phosphate + an unfolded polypeptide.. Its function is as follows. Together with its co-chaperonin GroES, plays an essential role in assisting protein folding. The GroEL-GroES system forms a nano-cage that allows encapsulation of the non-native substrate proteins and provides a physical environment optimized to promote and accelerate protein folding. The sequence is that of Chaperonin GroEL 2 from Frankia alni (strain DSM 45986 / CECT 9034 / ACN14a).